The primary structure comprises 89 residues: Gallinacin-13 (89 aa).

Residues 1-23 (MRILQLLFAIVVILLLQDAPARG) form the signal peptide. 3 disulfides stabilise this stretch: cysteine 30/cysteine 58, cysteine 37/cysteine 51, and cysteine 41/cysteine 59. A disordered region spans residues 66-89 (PFSNPKHSVLHTAEQDPSPSLGGT).

It belongs to the beta-defensin family. In terms of tissue distribution, expressed in the liver, gall bladder, kidney, small intestine, spleen, testis, ovary and male and female reproductive tracts. Not detected in the ovarian stroma and the theca and granulosa layers of the ovarian follicle.

The protein resides in the secreted. It is found in the cytoplasmic granule. In terms of biological role, has bactericidal activity. Potent activity against E.coli, L.monocytogenes, S.typhimurium and S.pyogenes but mot against S.aureus. Functionally, has bactericidal activity. The polypeptide is Gallinacin-13 (GAL13) (Gallus gallus (Chicken)).